Reading from the N-terminus, the 202-residue chain is MAWELLSVIGIIAFAVSGAIVAMEEEYDILGVYILGIVTAFGGGAIRNLLIGVPVSALWEQGAYFQIALLSITIVFLFPKLLLKHWNKWGNLSDAIGLAAFAIQGALYAVKMGHPLSAVIVAAVLTGSGGGIIRDLLAGRKPLVLKAEIYAVWAALGGLIVGLGWLGNSFGLYVLFFVLVVCRVCSYMFNWKLPNRSFRLDN.

Transmembrane regions (helical) follow at residues 3–23, 26–46, 63–83, 90–110, 113–133, and 160–180; these read WELLSVIGIIAFAVSGAIVAM, EYDILGVYILGIVTAFGGGAI, AYFQIALLSITIVFLFPKLLL, GNLSDAIGLAAFAIQGALYAV, GHPLSAVIVAAVLTGSGGGII, and IVGLGWLGNSFGLYVLFFVLV.

This sequence belongs to the UPF0126 family.

It localises to the cell membrane. The chain is UPF0126 membrane protein YvgT (yvgT) from Bacillus subtilis (strain 168).